Reading from the N-terminus, the 323-residue chain is GTP 3',8-cyclase (323 aa).

Positions 5–228 constitute a Radical SAM core domain; the sequence is GFGRKVDYLR…TVLRDTSSPA (224 aa). Arg14 provides a ligand contact to GTP. Cys21 and Cys25 together coordinate [4Fe-4S] cluster. Tyr27 contacts S-adenosyl-L-methionine. Cys28 contacts [4Fe-4S] cluster. Arg64 serves as a coordination point for GTP. Position 68 (Gly68) interacts with S-adenosyl-L-methionine. Thr95 is a GTP binding site. Ser119 serves as a coordination point for S-adenosyl-L-methionine. Lys155 contacts GTP. Met189 lines the S-adenosyl-L-methionine pocket. Cys250 and Cys253 together coordinate [4Fe-4S] cluster. Position 255–257 (255–257) interacts with GTP; the sequence is RIR. Cys267 provides a ligand contact to [4Fe-4S] cluster. The span at 302–313 shows a compositional bias: basic and acidic residues; the sequence is KNKWSQKDDNEV. Positions 302–323 are disordered; the sequence is KNKWSQKDDNEVSTRAFYQTGG.

This sequence belongs to the radical SAM superfamily. MoaA family. Monomer and homodimer. [4Fe-4S] cluster is required as a cofactor.

It catalyses the reaction GTP + AH2 + S-adenosyl-L-methionine = (8S)-3',8-cyclo-7,8-dihydroguanosine 5'-triphosphate + 5'-deoxyadenosine + L-methionine + A + H(+). The protein operates within cofactor biosynthesis; molybdopterin biosynthesis. In terms of biological role, catalyzes the cyclization of GTP to (8S)-3',8-cyclo-7,8-dihydroguanosine 5'-triphosphate. The polypeptide is GTP 3',8-cyclase (Aliarcobacter butzleri (strain RM4018) (Arcobacter butzleri)).